Here is a 44-residue protein sequence, read N- to C-terminus: Cuticle protein CP459 (44 aa).

A run of 2 repeats spans residues 3–20 and 27–44.

As to expression, calcified shell.

The chain is Cuticle protein CP459 from Cancer pagurus (Rock crab).